We begin with the raw amino-acid sequence, 388 residues long: MAAISARPLTQKALKVASPDTLHLVADAPVPTLDQDDSVLIRVVCVAINPVDGKSAELSPTPGATSGTDFAGIVVALHGDAKSRTETADTIKTGDRVMGFVFGNNPHVLGNGAFAEYVTLPRRFLWRVPDHMSLEAAASLPVGIASVGMALHYLHISMSSLLQAVSRSIAAASASQHHDGAFDSDANVFILVYGGGTSTGAIAIQILKAAGFHPITCCSSESASRAKRLGAAATFDYQSATCGRDIRDYTNDSLTLAIDCLSESASMAICYEAIGSAGGRYVSLDPFPVRGCVRRSIVPDWICSFTQFGQSIPWAPPYNLDERPDDHRLAEEWYHLAQKLLDAELIEAPTLEIRSGGLLHVPEGVAAVKLGQIKRRKLVYHISEEALP.

51–54 (VDGK) is an NADP(+) binding site. 142–149 (VGIASVGM) lines the substrate pocket. Residues 219–222 (SSES), Tyr237, and 284–285 (LD) each bind NADP(+). 304-308 (SFTQF) is a binding site for substrate. An NADP(+)-binding site is contributed by 373-374 (IK).

Belongs to the zinc-containing alcohol dehydrogenase family. In terms of assembly, monomer.

Its pathway is secondary metabolite biosynthesis. Functionally, trans-enoyl reductase; part of the gene cluster that mediates the biosynthesis of tenellin-type 2-pyridones, iron-chelating compounds involved in iron stress tolerance, competition with the natural competitor fungus Metarhizium robertsii and insect hosts infection. TenC collaborates with the hybrid PKS-NRPS synthetase tenS to catalyze the assembly of the polyketide-amino acid backbone, since tenS lacks a designated enoylreductase (ER) domain. Upon formation of the polyketide backbone on the thiotemplate of tenS, the triketide is transferred to the NRPS module and linked to tyrosine to produce the pyrrolidine-2-dione intermediates, including pretellinin A, 11-hydropretellenin A, 12-hydropretellenin A, 13-hydropretellenin A, 14-hydropretellenin A, 12-oxopretellenin A and prototellinin D. The pathway begins with the assembly of the polyketide-amino acid backbone by the hybrid PKS-NRPS tenS with the help of the enoyl reductase tenC. These enzymes catalyze the synthesis of the pyrrolidine-2-dione intermediates pretellinin A, 11-hydropretellenin A, 12-hydropretellenin A, 13-hydropretellenin A, 14-hydropretellenin A, 12-oxopretellenin A and prototellinin D. The cytochrome P450 monooxygenase tenA then catalyzes an oxidative ring expansion of pretenellin A and 14-hydropretellenin A to form the 2-pyridone core, leading to pretenellin B and pyridovericin, respectively. The cytochrome P450 monooxygenase tenB is then required for the selective N-hydroxylation of the 2-pyridone nitrogen of yield tellinin and 15-hydroxytellenin (15-HT), respectively. The UDP-glucosyltransferase GT1 and the methyltransferase MT1, located outside the tenS gene cluster, contribute to the stepwise glycosylation and methylation of 15-HT to obtain the glycoside pyridovericin-N-O-(4-O-methyl-beta-D-glucopyranoside) (PMGP). Additional related compounds such as 1-O-methyl-15-HT, (8Z)-1-O-methyl-15-HT, and O-methyltenellin A are also produced but the enzymes involved in their biosynthesis have still to be determined. This chain is Trans-enoyl reductase tenC, found in Beauveria bassiana (strain ARSEF 2860) (White muscardine disease fungus).